Here is a 394-residue protein sequence, read N- to C-terminus: QWRF motif-containing protein 7 (394 aa).

The tract at residues 1-171 is disordered; the sequence is MATTGRRLRP…ESPVSKAKIR (171 aa). A compositionally biased stretch (low complexity) spans 14 to 67; sequence NNNRSRTISSSISLPVSLNASLSSSTSSSSSSSPSNSSKRVMITRSQSTTRSSR. The span at 85 to 96 shows a compositional bias: polar residues; the sequence is NSASRSQEINNG. Positions 97-110 are enriched in basic and acidic residues; it reads RSRESFARYLEQRT. 2 stretches are compositionally biased toward polar residues: residues 111–120 and 142–157; these read RGSPRSNASS and TMKT…TSMC. The QWRF motif signature appears at 211–214; the sequence is QWRF.

Belongs to the QWRF family.

This chain is QWRF motif-containing protein 7 (QWRF7), found in Arabidopsis thaliana (Mouse-ear cress).